The sequence spans 392 residues: Lipid-A-disaccharide synthase (392 aa).

This sequence belongs to the LpxB family.

The catalysed reaction is a lipid X + a UDP-2-N,3-O-bis[(3R)-3-hydroxyacyl]-alpha-D-glucosamine = a lipid A disaccharide + UDP + H(+). It participates in bacterial outer membrane biogenesis; LPS lipid A biosynthesis. In terms of biological role, condensation of UDP-2,3-diacylglucosamine and 2,3-diacylglucosamine-1-phosphate to form lipid A disaccharide, a precursor of lipid A, a phosphorylated glycolipid that anchors the lipopolysaccharide to the outer membrane of the cell. The protein is Lipid-A-disaccharide synthase of Syntrophotalea carbinolica (strain DSM 2380 / NBRC 103641 / GraBd1) (Pelobacter carbinolicus).